The following is a 1293-amino-acid chain: Phosphoribosylformylglycinamidine synthase (1293 aa).

ATP-binding positions include 305–316 and alanine 676; that span reads GAATGSGGEIRD. Residues 305–328 form a disordered region; that stretch reads GAATGSGGEIRDEGATGRGSKPKA. Aspartate 677, glutamate 716, asparagine 720, and aspartate 884 together coordinate Mg(2+). Residue serine 886 coordinates ATP. One can recognise a Glutamine amidotransferase type-1 domain in the interval 1040–1293; the sequence is MAILREQGVN…MFRNARVNLG (254 aa). The active-site Nucleophile is cysteine 1133. Residues histidine 1258 and glutamate 1260 contribute to the active site.

In the N-terminal section; belongs to the FGAMS family. In terms of assembly, monomer.

The protein resides in the cytoplasm. It catalyses the reaction N(2)-formyl-N(1)-(5-phospho-beta-D-ribosyl)glycinamide + L-glutamine + ATP + H2O = 2-formamido-N(1)-(5-O-phospho-beta-D-ribosyl)acetamidine + L-glutamate + ADP + phosphate + H(+). It participates in purine metabolism; IMP biosynthesis via de novo pathway; 5-amino-1-(5-phospho-D-ribosyl)imidazole from N(2)-formyl-N(1)-(5-phospho-D-ribosyl)glycinamide: step 1/2. Its function is as follows. Phosphoribosylformylglycinamidine synthase involved in the purines biosynthetic pathway. Catalyzes the ATP-dependent conversion of formylglycinamide ribonucleotide (FGAR) and glutamine to yield formylglycinamidine ribonucleotide (FGAM) and glutamate. The sequence is that of Phosphoribosylformylglycinamidine synthase from Shewanella sp. (strain MR-7).